We begin with the raw amino-acid sequence, 391 residues long: Galactarate dehydratase (D-threo-forming) (391 aa).

Arg15 provides a ligand contact to substrate. Mg(2+) is bound by residues Asp42 and His45. Tyr89 lines the substrate pocket. Tyr90 functions as the Proton donor in the catalytic mechanism. Catalysis depends on Tyr164, which acts as the Proton acceptor. Mg(2+)-binding residues include Asp193, Glu221, and His246. Position 296 (Thr296) interacts with substrate. Thr297 contributes to the Mg(2+) binding site. Arg385 lines the substrate pocket.

This sequence belongs to the mandelate racemase/muconate lactonizing enzyme family. Mg(2+) serves as cofactor.

It carries out the reaction galactarate = (2S,3R)-dihydroxy-5-oxohexanedioate + H2O. Catalyzes the regioselective dehydration of galactarate into 2-keto-D-threo-4,5-dihydroxyadipate ((2S,3R)-dihydroxy-5-oxohexanedioate). Is not active on other acid sugars. This chain is Galactarate dehydratase (D-threo-forming), found in Oceanobacillus iheyensis (strain DSM 14371 / CIP 107618 / JCM 11309 / KCTC 3954 / HTE831).